The chain runs to 245 residues: Lytic switch protein BZLF1 (245 aa).

The segment at 1 to 167 (MMDPNSTSED…RTRKPLQPES (167 aa)) is transactivation. Phosphothreonine is present on residues Thr-14 and Thr-159. Positions 145-167 (GAPQPAPAAAPARRTRKPLQPES) are disordered. The short motif at 157–194 (RRTRKPLQPESLEECDSELEIKRYKNRVASRKCRAKFK) is the Bipartite nuclear localization signal element. A phosphoserine mark is found at Ser-167, Ser-173, and Ser-186. Residues 178–195 (KRYKNRVASRKCRAKFKH) are basic motif. Positions 178-228 (KRYKNRVASRKCRAKFKHLLQHYREVASAKSSENDRLRLLLKQMCPSLDVD) constitute a bZIP domain. The leucine-zipper stretch occupies residues 196 to 228 (LLQHYREVASAKSSENDRLRLLLKQMCPSLDVD). The interval 229–245 (SIIPRTPDVLHEDLLNF) is accessory activation domain.

The protein belongs to the bZIP family. As to quaternary structure, homodimer. Interacts (via b-ZIP domain) with the DNA polymerase processivity factor BMRF1 (via N-terminus); this interaction may inhibit BZLF1-induced transcription of the BMRF1 promoter. Interacts with human UBN1, CRTC2 and RACK1. Interacts (via N-terminus) with human PAX5 (via N-terminus); this interaction inhibits BZLF1-mediated lytic viral reactivation. Interacts (via leucine-zipper domain) with host CEBPA; this interaction induces G1 host cell cycle arrest. Interacts (via C-terminus) with host TP53BP1 (via C-terminus); this interaction is involved in the activation of the viral lytic cycle. Interacts with host chromatin-remodeling ATPase INO80; this interaction participates to the activation of early lytic viral genes by BZLF1. Interacts with host regulator of chromatin SMARCA5/hSNF2H; this interaction participates to the activation of early lytic viral genes by BZLF1. Interacts with host PLSCR1/Phospholipid scramblase 1; this interaction negatively regulates the transcriptional regulatory activity of BZLF1 by preventing the formation of the BZLF1-CBP complex.

Its subcellular location is the host nucleus. Its function is as follows. Transcription factor that acts as a molecular switch to induce the transition from the latent to the lytic or productive phase of the virus cycle. Mediates the switch from the latent to the lytic cycle of infection in cells containing a highly methylated viral genome. Probably binds to silenced chromatin and recruits host chromatin-remodeling enzymes. Regulates this switch by binding to 2 types of ZEBRA response elements (ZREs): the CpG-free AP-1 like elements (latency) and the methylated CpG-containing elements (lytic replication). Activates preferentially the methylated forms of the viral lytic R (BRLF1) and Na (BRRF1) gene promoters, the latters being the first genes activated during Z-mediated reactivation in latently infected cells. BZLF1 and BRLF1 act together to trigger lytic replication. Also binds the lytic origin of replication, oriLyt. Induces G1 cell cycle arrest by stabilizing the host CCAAT/enhancer binding protein CEBPA. This function is important because the lytic cycle preferentially takes place in host cells arrested in G1. The chain is Lytic switch protein BZLF1 from Homo sapiens (Human).